Reading from the N-terminus, the 397-residue chain is Tryptophan synthase beta chain (397 aa).

Lys87 carries the N6-(pyridoxal phosphate)lysine modification.

The protein belongs to the TrpB family. As to quaternary structure, tetramer of two alpha and two beta chains. Pyridoxal 5'-phosphate is required as a cofactor.

It catalyses the reaction (1S,2R)-1-C-(indol-3-yl)glycerol 3-phosphate + L-serine = D-glyceraldehyde 3-phosphate + L-tryptophan + H2O. Its pathway is amino-acid biosynthesis; L-tryptophan biosynthesis; L-tryptophan from chorismate: step 5/5. In terms of biological role, the beta subunit is responsible for the synthesis of L-tryptophan from indole and L-serine. In Shigella boydii serotype 18 (strain CDC 3083-94 / BS512), this protein is Tryptophan synthase beta chain.